Here is a 488-residue protein sequence, read N- to C-terminus: GTPase Der (488 aa).

EngA-type G domains lie at 3-166 and 199-372; these read PVVA…AEAM and IKLA…DSAT. GTP contacts are provided by residues 9 to 16, 56 to 60, 118 to 121, 205 to 212, 252 to 256, and 317 to 320; these read GRPNVGKS, DTGGI, NKVD, GKPNVGKS, DTAGV, and NKWD. Positions 373–457 constitute a KH-like domain; the sequence is RRVSTSMLTR…PIQLRFQEGD (85 aa). The segment at 469 to 488 is disordered; the sequence is MSQERRRKRALSHIKDRKTK. Basic residues predominate over residues 473–488; the sequence is RRRKRALSHIKDRKTK.

It belongs to the TRAFAC class TrmE-Era-EngA-EngB-Septin-like GTPase superfamily. EngA (Der) GTPase family. Associates with the 50S ribosomal subunit.

Its function is as follows. GTPase that plays an essential role in the late steps of ribosome biogenesis. This chain is GTPase Der, found in Shewanella putrefaciens (strain CN-32 / ATCC BAA-453).